The sequence spans 365 residues: tRNA/tmRNA (uracil-C(5))-methyltransferase (365 aa).

Positions 189, 217, 222, 238, and 298 each coordinate S-adenosyl-L-methionine. Cysteine 323 serves as the catalytic Nucleophile. The active-site Proton acceptor is the glutamate 357.

This sequence belongs to the class I-like SAM-binding methyltransferase superfamily. RNA M5U methyltransferase family. TrmA subfamily.

The enzyme catalyses uridine(54) in tRNA + S-adenosyl-L-methionine = 5-methyluridine(54) in tRNA + S-adenosyl-L-homocysteine + H(+). It catalyses the reaction uridine(341) in tmRNA + S-adenosyl-L-methionine = 5-methyluridine(341) in tmRNA + S-adenosyl-L-homocysteine + H(+). Dual-specificity methyltransferase that catalyzes the formation of 5-methyluridine at position 54 (m5U54) in all tRNAs, and that of position 341 (m5U341) in tmRNA (transfer-mRNA). The protein is tRNA/tmRNA (uracil-C(5))-methyltransferase of Shewanella amazonensis (strain ATCC BAA-1098 / SB2B).